The following is a 503-amino-acid chain: Exonuclease V, mitochondrial (503 aa).

Residues Cys-92, Cys-467, Cys-470, and Cys-476 each coordinate [4Fe-4S] cluster.

This sequence belongs to the EXO5 family. In terms of assembly, monomer. Mg(2+) is required as a cofactor. [4Fe-4S] cluster serves as cofactor.

It localises to the mitochondrion. In terms of biological role, single strand DNA specific 5' exonuclease involved in mitochondrial DNA replication and recombination. Releases dinucleotides as main products of catalysis. Has the capacity to slide across 5'double-stranded DNA or 5'RNA sequences and resumes cutting two nucleotides downstream of the double-stranded-to-single-stranded junction or RNA-to-DNA junction, respectively. The chain is Exonuclease V, mitochondrial (EXO5) from Candida glabrata (strain ATCC 2001 / BCRC 20586 / JCM 3761 / NBRC 0622 / NRRL Y-65 / CBS 138) (Yeast).